We begin with the raw amino-acid sequence, 275 residues long: Transmembrane protein 45B (275 aa).

A run of 7 helical transmembrane segments spans residues His7–Leu27, Ile47–Val67, Leu94–Leu114, Val116–Val136, Ile146–Ile166, Leu180–Gly200, and Leu212–Val232. Phosphoserine occurs at positions 270 and 272.

This sequence belongs to the TMEM45 family. In terms of assembly, (Microbial infection) Interacts with sindbis virus nsP1 and nsP4; these interactions lead to viral RNA replication inhibition. As to quaternary structure, (Microbial infection) Interacts with chikungunya virus nsP1 and nsP4; these interactions lead to viral RNA replication inhibition.

It is found in the endosome membrane. It localises to the lysosome membrane. The protein localises to the golgi apparatus. Its subcellular location is the trans-Golgi network membrane. Its function is as follows. Plays a role in innate immunity. Mechanistically, promotes alphaviruses RNA degradation by interacting with the viral polymerase nsP4 and the mRNA-capping enzyme nsP1 and thereby interfering with the interaction between viral RNA and nsP1. The chain is Transmembrane protein 45B (TMEM45B) from Homo sapiens (Human).